A 156-amino-acid chain; its full sequence is Insulin (156 aa).

The first 31 residues, Met-1–Ala-31, serve as a signal peptide directing secretion. Cystine bridges form between Cys-37/Cys-114, Cys-49/Cys-119, Cys-61/Cys-128, and Cys-112/Cys-115. The propeptide at Asp-79–Asn-93 is c peptide beta. Positions Glu-96–Thr-102 are cleaved as a propeptide — c peptide alpha. The propeptide at Thr-141–Ser-156 is d peptide. The propeptide at Ser-144 to Ser-156 is d peptide short form. 4-carboxyglutamate is present on Glu-152.

It belongs to the insulin family. Heterodimer of a B chain or a B chain' and an A chain probably linked by three disulfide bonds. In terms of tissue distribution, expressed in the central region of the cerebral ganglia mostly within the F and C clusters.

It localises to the secreted. In terms of biological role, involved in glucose metabolism. The polypeptide is Insulin (PIN) (Aplysia californica (California sea hare)).